The sequence spans 185 residues: Large ribosomal subunit protein uL22 (185 aa).

The tract at residues 157–185 (VAAPTPDEDAPKKKQSKKKMARQKLMQRD) is disordered. A compositionally biased stretch (basic residues) spans 169 to 178 (KKQSKKKMAR).

Belongs to the universal ribosomal protein uL22 family.

This Argas monolakensis (Mono lake bird tick) protein is Large ribosomal subunit protein uL22 (RpL17).